Reading from the N-terminus, the 184-residue chain is MDTQKIEAAVKMIIEAVGENANREGLQETPARVARMYQEIFSGLGQTAEEHLSKSFEIIDDNMVVEKDIFFHTMCEHHFLPFYGRAHIAYIPDGRVAGLSKLARTVEVYSKKPQIQERLNIEVADALMDYLGAKGAFVVIEAEHMCMSMRGVRKPGTATLTTVARGLFETDKDLRDQAYRLMGL.

Zn(2+) is bound by residues cysteine 75, histidine 78, and cysteine 146.

The protein belongs to the GTP cyclohydrolase I family. Homomer.

The enzyme catalyses GTP + H2O = 7,8-dihydroneopterin 3'-triphosphate + formate + H(+). It participates in cofactor biosynthesis; 7,8-dihydroneopterin triphosphate biosynthesis; 7,8-dihydroneopterin triphosphate from GTP: step 1/1. The protein is GTP cyclohydrolase 1 of Streptococcus pneumoniae (strain Hungary19A-6).